We begin with the raw amino-acid sequence, 222 residues long: Ras-related protein Rab-21 (222 aa).

Residue Ala-2 is modified to N-acetylalanine. GTP-binding residues include Gly-25, Gly-28, Lys-29, Thr-30, Ser-31, Asn-42, Asp-43, His-45, Thr-47, and Thr-48. A Mg(2+)-binding site is contributed by Thr-30. The Switch 1 signature appears at 40 to 53 (KFNDKHITTLQASF). Mg(2+) is bound by residues Thr-48 and Asp-71. The short motif at 73-91 (AGQERFHALGPIYYRDSNG) is the Switch 2 element. GTP is bound by residues Gly-74, Asn-129, Lys-130, Asp-132, Ala-160, and Lys-161. Residues Cys-218 and Cys-219 are each lipidated (S-geranylgeranyl cysteine). Residue Cys-219 is modified to Cysteine methyl ester. A propeptide spans 220–222 (SSG) (removed in mature form).

It belongs to the small GTPase superfamily. Rab family. As to quaternary structure, interacts with the cytoplasmic tail of integrins ITGA1, ITGA2, ITGA5, ITGA6, ITGA11 and ITGB1; this interaction is dependent upon its GDP/GTP cycle. Interacts with RABGEF1 (via VPS9 domain). Interacts with ANKRD27. Interacts (in GTP-bound form) with VAMP8 in response to starvation; the interaction probably regulates VAMP8 endolysosomal trafficking. Interacts (active GTP-bound form) with TMED10; the interaction is indirect and regulates TMED10 abundance and localization at the Golgi. The cofactor is Mg(2+).

Its subcellular location is the endoplasmic reticulum membrane. The protein localises to the golgi apparatus. It localises to the trans-Golgi network. It is found in the golgi apparatus membrane. The protein resides in the early endosome membrane. Its subcellular location is the cytoplasmic vesicle membrane. The protein localises to the cleavage furrow. It localises to the cell projection. It is found in the neuron projection. The catalysed reaction is GTP + H2O = GDP + phosphate + H(+). Its activity is regulated as follows. Regulated by guanine nucleotide exchange factors (GEFs) including ANKRD27 and RABGEF1, which promote the exchange of bound GDP for free GTP. Regulated by GTPase activating proteins (GAPs) which increase the GTP hydrolysis activity. Inhibited by GDP dissociation inhibitors (GDIs). Functionally, the small GTPases Rab are key regulators of intracellular membrane trafficking, from the formation of transport vesicles to their fusion with membranes. Rabs cycle between an inactive GDP-bound form and an active GTP-bound form that is able to recruit to membranes different sets of downstream effectors directly responsible for vesicle formation, movement, tethering and fusion. RAB21 is involved in membrane trafficking control. Regulates integrin internalization and recycling, but does not influence the traffic of endosomally translocated receptors in general. As a result, may regulate cell adhesion and migration. During the mitosis of adherent cells, controls the endosomal trafficking of integrins which is required for the successful completion of cytokinesis. Involved in neurite growth. Following SBF2/MTMT13-mediated activation in response to starvation-induced autophagy, binds to and regulates SNARE protein VAMP8 endolysosomal transport required for SNARE-mediated autophagosome-lysosome fusion. Modulates protein levels of the cargo receptors TMED2 and TMED10, and required for appropriate Golgi localization of TMED10. This Bos taurus (Bovine) protein is Ras-related protein Rab-21 (RAB21).